The sequence spans 372 residues: MSPGLDLEQSFSQTLEGFGLSDQAARLIWLPLPMLLVLVAAVVGVLVTVWLERKISAAVQQRIGPEYAGALGVLQPLADGLKLLVKEDIIPARADGLLFTLGPVLVVVPVILSWLIVPFGQNLLISNVGVGIFLWISLSSVQPIGLLMSGYASNNKYSLLGGLRAAAQSISYEIPLALAVLAVVMMSNSLSTVDIVSQQTGAGILSWNIWRQPVGFLIFWICALAECERLPFDLPEAEEELVAGYQTEYAGMKFALFYLGSYINLVLSALLVSVLYLGGWGFPVPVEWLAGWLGQSVDAPLVQVITGATGIVMTVLKAYLLVFIAILLRWTTPRVRIDQLLDLGWKFLLPLALVNLLVTAALKLAFPVAFGG.

A run of 8 helical transmembrane segments spans residues 27-47 (LIWLPLPMLLVLVAAVVGVLV), 97-117 (LLFTLGPVLVVVPVILSWLIV), 128-148 (VGVGIFLWISLSSVQPIGLLM), 166-186 (AAQSISYEIPLALAVLAVVMM), 204-224 (ILSWNIWRQPVGFLIFWICAL), 266-286 (VLSALLVSVLYLGGWGFPVPV), 308-328 (ATGIVMTVLKAYLLVFIAILL), and 347-367 (FLLPLALVNLLVTAALKLAFP).

It belongs to the complex I subunit 1 family. In terms of assembly, NDH-1 is composed of at least 11 different subunits.

It localises to the cellular thylakoid membrane. The enzyme catalyses a plastoquinone + NADH + (n+1) H(+)(in) = a plastoquinol + NAD(+) + n H(+)(out). It carries out the reaction a plastoquinone + NADPH + (n+1) H(+)(in) = a plastoquinol + NADP(+) + n H(+)(out). Functionally, NDH-1 shuttles electrons from an unknown electron donor, via FMN and iron-sulfur (Fe-S) centers, to quinones in the respiratory and/or the photosynthetic chain. The immediate electron acceptor for the enzyme in this species is believed to be plastoquinone. Couples the redox reaction to proton translocation, and thus conserves the redox energy in a proton gradient. This is NAD(P)H-quinone oxidoreductase subunit 1 from Synechococcus sp. (strain WH7803).